A 437-amino-acid chain; its full sequence is ATP-dependent RNA helicase RhlB (437 aa).

The Q motif signature appears at 9–37 (QKFADLGLQPQVTEGLEKKGFEYCTPIQA). Residues 40–219 (LPVLLTGQDI…FEHMHNPEHV (180 aa)) enclose the Helicase ATP-binding domain. Position 53 to 60 (53 to 60 (AQTGTGKT)) interacts with ATP. Positions 165–168 (DEAD) match the DEAD box motif. The Helicase C-terminal domain occupies 245–390 (ALLQTLIEEE…VSEYDASALI (146 aa)). The interval 397–437 (IRMRAPRVQQRRTNTGGTRSGNRKPQGRRPRQPRQSAPKQS) is disordered. The segment covering 417 to 428 (GNRKPQGRRPRQ) has biased composition (basic residues).

The protein belongs to the DEAD box helicase family. RhlB subfamily. Component of the RNA degradosome, which is a multiprotein complex involved in RNA processing and mRNA degradation.

Its subcellular location is the cytoplasm. It carries out the reaction ATP + H2O = ADP + phosphate + H(+). Its function is as follows. DEAD-box RNA helicase involved in RNA degradation. Has RNA-dependent ATPase activity and unwinds double-stranded RNA. The chain is ATP-dependent RNA helicase RhlB from Vibrio parahaemolyticus serotype O3:K6 (strain RIMD 2210633).